The primary structure comprises 1280 residues: Ankyrin repeat and sterile alpha motif domain-containing protein 1B (1280 aa).

ANK repeat units follow at residues 2 to 31 (GKEQELLEAARTGNVGLVEKLLSGKKGLLG), 57 to 86 (SGYTPLHHASLNGHRDVVLKLLQFEASTNV), 90 to 119 (KGCFPLHLAAWRGDVDIVQILIHHGPSHSR), 126 to 155 (EKETALHCAAQYGHSEVVRVLLQELTDPSM), 159 to 188 (RGETPLDLAALYGRLQVVRMLLTAHPNLMS), 192 to 221 (RKHTPLHLAARNGHYATVQVLLEADMDVNT), and 224 to 253 (EKGSALHEAALFGKMDVVQLLLDSGIDANI). Disordered regions lie at residues 299–322 (RHRPIPTPRTSIPSPVPSPSLRHK), 361–399 (MESFGSGRLSDEERNGTLTRINKRPTPPLPPALEEEEKS), 479–573 (SVSD…STGS), 704–723 (NGEARSNCTGGSSPANSNTG), and 755–791 (SNLVAVSPIEEEQWGSRGQSSPGKSSPSRLERTPSFT). Positions 482-491 (DAERGNHGDD) are enriched in basic and acidic residues. Composition is skewed to polar residues over residues 520–550 (KQRTSLSSSQDVQKPLQNHSGDPSEVSSSLG), 707–723 (ARSNCTGGSSPANSNTG), and 770–782 (SRGQSSPGKSSPS). SAM domains lie at 824–890 (CPVQ…LPRV) and 898–963 (NNPT…RLHE). Disordered regions lie at residues 960–994 (RLHEDPPQKPPRAISLREPTGNHTPPQLSPSLSQA) and 1208–1243 (GSSTLPESFDSKPSKPVPKPRGNIRKSMEQPSMDQK). Positions 980 to 994 (GNHTPPQLSPSLSQA) are enriched in polar residues. One can recognise a PID domain in the interval 1071–1223 (IFQSCDYEAY…ESFDSKPSKP (153 aa)).

The protein localises to the cytoplasm. In Danio rerio (Zebrafish), this protein is Ankyrin repeat and sterile alpha motif domain-containing protein 1B (anks1b).